Here is a 41-residue protein sequence, read N- to C-terminus: Large ribosomal subunit protein bL36 (41 aa).

This sequence belongs to the bacterial ribosomal protein bL36 family.

In Rhodopseudomonas palustris (strain BisB18), this protein is Large ribosomal subunit protein bL36.